Here is a 1278-residue protein sequence, read N- to C-terminus: Sterol regulatory element-binding protein cleavage-activating protein (1278 aa).

Residues Met1–His18 lie on the Cytoplasmic side of the membrane. Residues Gly19–Ala39 form a helical membrane-spanning segment. Residues Cys40 to Glu279 lie on the Lumenal side of the membrane. Residues Lys46–Glu284 form a loop-1 region. A disordered region spans residues Pro60 to Glu80. An N-linked (GlcNAc...) asparagine glycan is attached at Asn263. Residues Ile280 to Tyr300 traverse the membrane as a helical segment. Residues Glu284–Ile442 enclose the SSD domain. Over Phe301–Lys312 the chain is Cytoplasmic. The helical transmembrane segment at Trp313–Leu333 threads the bilayer. Over Cys334 to Asn344 the chain is Lumenal. Residues Gly345–Thr365 form a helical membrane-spanning segment. The Cytoplasmic portion of the chain corresponds to Lys366–Gly401. Residues Ile402 to Val422 traverse the membrane as a helical segment. Residue Val423 is a topological domain, lumenal. A helical membrane pass occupies residues Gly424–Ile444. Residues Arg445–Arg518 are Cytoplasmic-facing. The ER export signal signature appears at Met447–Leu452. Residues Lys454 and Lys466 each participate in a glycyl lysine isopeptide (Lys-Gly) (interchain with G-Cter in ubiquitin) cross-link. The helical transmembrane segment at Leu519–Leu539 threads the bilayer. Residues Asp535–Lys710 are loop-7. The Lumenal portion of the chain corresponds to Arg540 to Thr707. The tract at residues Pro581–Gly618 is disordered. Asn590 and Asn641 each carry an N-linked (GlcNAc...) asparagine glycan. Positions Glu668–Gly696 are disordered. Residues Leu708–Cys728 form a helical membrane-spanning segment. Residues Leu729–Asp1278 lie on the Cytoplasmic side of the membrane. The interaction with SREBF2 stretch occupies residues Arg731–Asp1278. One copy of the WD 1 repeat lies at Val771–Arg811. Phosphoserine is present on residues Ser821, Ser837, Ser850, Ser905, and Ser935. Residues Glu834–Asp904 form a disordered region. WD repeat units follow at residues Pro951–Ser1001 and Glu1004–Pro1041. Arg1050 is modified (omega-N-methylarginine). 4 WD repeats span residues Ala1076 to Thr1113, Gly1116 to His1154, Ala1157 to Ser1194, and Gln1196 to Thr1234.

It belongs to the WD repeat SCAP family. As to quaternary structure, membrane region forms a homotetramer. Component of the SCAP-SREBP complex (composed of SCAP and SREBF1/SREBP1 or SREBF2/SREBP2); interacts with SREBF1/SREBP1 or SREBF2/SREBP2 through its C-terminal cytoplasmic domain. Forms a ternary complex with INSIG1 or INSIG2 through its transmembrane domains at high sterol concentrations. Interacts with PAQR3; the interaction anchors the SCAP-SREBP complex to the Golgi apparatus in low cholesterol conditions. Interacts with the SEC23-SEC24 complex in a SAR1-GTP-dependent manner through an ER export signal in its third cytoplasmic loop. Interacts with RNF139; the interaction inhibits the interaction of SCAP with SEC24B and hampering the ER to Golgi transport of the SCAP-SREBP complex. Interacts with SPRING1. In terms of processing, ubiquitinated at Lys-454 and Lys-466. RNF145 triggers ubiquitination of SCAP, likely inhibiting SCAP-SREBP complex transport to the Golgi apparatus and the subsequent processing/maturation of SREBF2/SREBP2.

It localises to the endoplasmic reticulum membrane. The protein resides in the golgi apparatus membrane. The protein localises to the cytoplasmic vesicle. Its subcellular location is the COPII-coated vesicle membrane. Functionally, escort protein required for cholesterol as well as lipid homeostasis. Regulates export of the SCAP-SREBP complex from the endoplasmic reticulum to the Golgi upon low cholesterol, thereby regulating the processing of sterol regulatory element-binding proteins (SREBPs) SREBF1/SREBP1 and SREBF2/SREBP2. At high sterol concentrations, formation of a ternary complex with INSIG (INSIG1 or INSIG2) leads to mask the ER export signal in SCAP, promoting retention of the complex in the endoplasmic reticulum. Low sterol concentrations trigger release of INSIG, a conformational change in the SSD domain of SCAP, unmasking of the ER export signal, promoting recruitment into COPII-coated vesicles and transport of the SCAP-SREBP to the Golgi: in the Golgi, SREBPs are then processed, releasing the transcription factor fragment of SREBPs from the membrane, its import into the nucleus and up-regulation of LDLR, INSIG1 and the mevalonate pathway. Binds cholesterol via its SSD domain. This is Sterol regulatory element-binding protein cleavage-activating protein from Bos taurus (Bovine).